A 488-amino-acid chain; its full sequence is Diacylglycerol kinase 3 (488 aa).

Positions 1 to 24 are disordered; sequence MDSPVSKTDASKEKFVASRPSTAD. The DAGKc domain maps to 87 to 245; sequence APHAPMVVFI…SWKILVSMPS (159 aa).

Belongs to the eukaryotic diacylglycerol kinase family. As to quaternary structure, monomer.

It carries out the reaction a 1,2-diacyl-sn-glycerol + ATP = a 1,2-diacyl-sn-glycero-3-phosphate + ADP + H(+). Functionally, phosphorylates the second messenger diacylglycerol (DAG) to generate phosphatidic acid (PA), another important signaling molecule. PA is required for plant development and responses to abiotic stress and pathogen attack. May be involved in the accumulation of PA during cold stress. The protein is Diacylglycerol kinase 3 (DGK3) of Arabidopsis thaliana (Mouse-ear cress).